A 274-amino-acid polypeptide reads, in one-letter code: Rhamnulose-1-phosphate aldolase (274 aa).

Glu117 is a catalytic residue. Zn(2+)-binding residues include His141, His143, and His212.

The protein belongs to the aldolase class II family. RhaD subfamily. As to quaternary structure, homotetramer. Zn(2+) serves as cofactor.

Its subcellular location is the cytoplasm. The catalysed reaction is L-rhamnulose 1-phosphate = (S)-lactaldehyde + dihydroxyacetone phosphate. It functions in the pathway carbohydrate degradation; L-rhamnose degradation; glycerone phosphate from L-rhamnose: step 3/3. Functionally, catalyzes the reversible cleavage of L-rhamnulose-1-phosphate to dihydroxyacetone phosphate (DHAP) and L-lactaldehyde. This Escherichia coli O45:K1 (strain S88 / ExPEC) protein is Rhamnulose-1-phosphate aldolase.